The sequence spans 299 residues: tRNA dimethylallyltransferase (299 aa).

5 to 12 (GPTASGKT) lines the ATP pocket. Position 7 to 12 (7 to 12 (TASGKT)) interacts with substrate. 3 interaction with substrate tRNA regions span residues 30–33 (DSAL), 154–158 (QRLSR), and 235–240 (RCVGYR).

Belongs to the IPP transferase family. As to quaternary structure, monomer. It depends on Mg(2+) as a cofactor.

It catalyses the reaction adenosine(37) in tRNA + dimethylallyl diphosphate = N(6)-dimethylallyladenosine(37) in tRNA + diphosphate. Its function is as follows. Catalyzes the transfer of a dimethylallyl group onto the adenine at position 37 in tRNAs that read codons beginning with uridine, leading to the formation of N6-(dimethylallyl)adenosine (i(6)A). This is tRNA dimethylallyltransferase from Shewanella denitrificans (strain OS217 / ATCC BAA-1090 / DSM 15013).